The chain runs to 127 residues: Biogenesis of lysosome-related organelles complex 1 subunit 2 (127 aa).

Belongs to the BLOC1S2 family. Component of the biogenesis of lysosome-related organelles complex-1 (BLOC-1). Interacts with BLOS1 and SNX1.

The protein localises to the cytoplasm. Its subcellular location is the endosome. In terms of biological role, component of the biogenesis of lysosome-related organelles complex-1 (BLOC-1), a complex that mediates the vacuolar degradative transport via the intracellular vesicle trafficking from the endosome to the vacuole. The chain is Biogenesis of lysosome-related organelles complex 1 subunit 2 (BLOS2) from Arabidopsis thaliana (Mouse-ear cress).